Here is a 417-residue protein sequence, read N- to C-terminus: Histidine--tRNA ligase (417 aa).

Belongs to the class-II aminoacyl-tRNA synthetase family.

It is found in the cytoplasm. The enzyme catalyses tRNA(His) + L-histidine + ATP = L-histidyl-tRNA(His) + AMP + diphosphate + H(+). In Pyrobaculum neutrophilum (strain DSM 2338 / JCM 9278 / NBRC 100436 / V24Sta) (Thermoproteus neutrophilus), this protein is Histidine--tRNA ligase.